The primary structure comprises 144 residues: 3-hydroxyacyl-[acyl-carrier-protein] dehydratase FabZ (144 aa).

Residue histidine 51 is part of the active site.

It belongs to the thioester dehydratase family. FabZ subfamily.

It is found in the cytoplasm. It catalyses the reaction a (3R)-hydroxyacyl-[ACP] = a (2E)-enoyl-[ACP] + H2O. Involved in unsaturated fatty acids biosynthesis. Catalyzes the dehydration of short chain beta-hydroxyacyl-ACPs and long chain saturated and unsaturated beta-hydroxyacyl-ACPs. This chain is 3-hydroxyacyl-[acyl-carrier-protein] dehydratase FabZ (fabZ1), found in Enterococcus faecalis (strain ATCC 700802 / V583).